Consider the following 246-residue polypeptide: Phosducin (246 aa).

The segment covering 1-14 has biased composition (acidic residues); the sequence is MEEAASQSLEEDFE. A disordered region spans residues 1–70; the sequence is MEEAASQSLE…DKDSKERMSR (70 aa). The Phosducin domain occupies 1-246; sequence MEEAASQSLE…QTNTEDEDIE (246 aa). Residues 58–69 are compositionally biased toward basic and acidic residues; that stretch reads SRDDKDSKERMS. Position 73 is a phosphoserine; by PKA (S73). The segment at 111 to 246 is thioredoxin fold; the sequence is YGFVYELETG…QTNTEDEDIE (136 aa).

This sequence belongs to the phosducin family. Interacts with CRX. Forms a complex with the beta and gamma subunits of the GTP-binding protein, transducin. Post-translationally, light-induced changes in cyclic nucleotide levels modulate the phosphorylation of this protein by cAMP kinase.

Its subcellular location is the cytoplasm. It localises to the cytosol. It is found in the nucleus. The protein localises to the cell projection. The protein resides in the cilium. Its subcellular location is the photoreceptor outer segment. It localises to the photoreceptor inner segment. Functionally, inhibits the transcriptional activation activity of the cone-rod homeobox CRX. May participate in the regulation of visual phototransduction or in the integration of photoreceptor metabolism. This Rattus norvegicus (Rat) protein is Phosducin (Pdc).